The sequence spans 78 residues: Ubiquinol-cytochrome-c reductase complex assembly factor 3 (78 aa).

Topologically, residues 1–5 (MSGMR) are mitochondrial matrix. The helical transmembrane segment at 6 to 26 (ILTGSVALGGLTYAIWIIFSP) threads the bilayer. At 27-78 (GEERKKEILKSLPEANPVRMEETRKRNAIMLQVLKDAAETNDNIARGFGSQK) the chain is on the mitochondrial intermembrane side.

The protein belongs to the UQCC3 family. Associates with the ubiquinol-cytochrome c reductase complex (mitochondrial respiratory chain complex III or cytochrome b-c1 complex).

The protein resides in the mitochondrion inner membrane. In terms of biological role, required for the assembly of the ubiquinol-cytochrome c reductase complex (mitochondrial respiratory chain complex III or cytochrome b-c1 complex), mediating cytochrome b recruitment and probably stabilization within the complex. Thereby, plays an important role in ATP production by mitochondria. Cardiolipin-binding protein, it may also control the cardiolipin composition of mitochondria membranes and their morphology. This chain is Ubiquinol-cytochrome-c reductase complex assembly factor 3, found in Danio rerio (Zebrafish).